We begin with the raw amino-acid sequence, 585 residues long: Nucleus accumbens-associated protein 2 (585 aa).

Residues 30 to 94 form the BTB domain; that stretch reads CDVSIVVKGQ…CYTGKLTMAA (65 aa). Residues K171 and K215 each participate in a glycyl lysine isopeptide (Lys-Gly) (interchain with G-Cter in SUMO2) cross-link. A compositionally biased stretch (polar residues) spans 238–261; the sequence is PYPQGERTSPGASSLPTTDSSTSY. Positions 238–269 are disordered; that stretch reads PYPQGERTSPGASSLPTTDSSTSYHNEDEDDD. Residues K296, K426, and K453 each participate in a glycyl lysine isopeptide (Lys-Gly) (interchain with G-Cter in SUMO2) cross-link. Residues 348 to 445 form the BEN domain; it reads GSGVYITRGQ…DMCTNARRVR (98 aa). Positions 541 to 585 are disordered; the sequence is APEQLPADGQSSPQAFEQGNTSSSRPQTPVATATRRPEGTYAGTL. The segment covering 549–571 has biased composition (polar residues); the sequence is GQSSPQAFEQGNTSSSRPQTPVA.

As to quaternary structure, homooligomer; mediated by the BTB domain. Interacts with the NuRD complex. Interacts (via C-terminal part) with HDAC2. Interacts (via BTB domain) with MTA1, MTA2 and MTA3.

It localises to the nucleus. Functionally, functions as a transcriptional repressor through its association with the NuRD complex. Recruits the NuRD complex to the promoter of MDM2, leading to the repression of MDM2 transcription and subsequent stability of p53/TP53. This is Nucleus accumbens-associated protein 2 (Nacc2) from Rattus norvegicus (Rat).